The primary structure comprises 265 residues: HUWE1-associated protein modifying stress responses (265 aa).

3 disordered regions span residues 1 to 22 (MEEK…HWFS), 140 to 173 (GKAP…SVET), and 194 to 219 (ISMR…RRNG). The span at 147–172 (SSRAPPRLAMVSPSRSTPSETSSSVE) shows a compositional bias: low complexity.

This sequence belongs to the HAPSTR1 family. Oligomer.

The protein resides in the nucleus. Its subcellular location is the cytoplasm. In terms of biological role, acts as a central player within a network of stress response pathways promoting cellular adaptability. Functions as a negative regulator of TP53/P53 in the cellular response to telomere erosion and probably also DNA damage. This Danio rerio (Zebrafish) protein is HUWE1-associated protein modifying stress responses.